The chain runs to 519 residues: Putative thymidine phosphorylase (519 aa).

It belongs to the thymidine/pyrimidine-nucleoside phosphorylase family. Type 2 subfamily.

It carries out the reaction thymidine + phosphate = 2-deoxy-alpha-D-ribose 1-phosphate + thymine. This is Putative thymidine phosphorylase from Maricaulis maris (strain MCS10) (Caulobacter maris).